Consider the following 327-residue polypeptide: Autoinducer 2 import system permease protein LsrD (327 aa).

A run of 9 helical transmembrane segments spans residues 3–23 (LNWE…FGAI), 41–61 (ICIG…GIDI), 63–83 (LGST…FGLP), 86–106 (LAVP…AALI), 114–134 (LVIT…LSGL), 158–178 (VLGL…FWLI), 211–231 (ALYG…VSYF), 257–277 (IYGG…VGYL), and 283–303 (MVGI…VVVV).

It belongs to the binding-protein-dependent transport system permease family. AraH/RbsC subfamily. As to quaternary structure, the complex is composed of two ATP-binding proteins (LsrA), two transmembrane proteins (LsrC and LsrD) and a solute-binding protein (LsrB).

The protein resides in the cell inner membrane. Functionally, part of the ABC transporter complex LsrABCD involved in autoinducer 2 (AI-2) import. Probably responsible for the translocation of the substrate across the membrane. This Enterobacter sp. (strain 638) protein is Autoinducer 2 import system permease protein LsrD (lsrD).